Here is a 357-residue protein sequence, read N- to C-terminus: UDP-N-acetylglucosamine--N-acetylmuramyl-(pentapeptide) pyrophosphoryl-undecaprenol N-acetylglucosamine transferase (357 aa).

UDP-N-acetyl-alpha-D-glucosamine is bound by residues 14–16 (SGG), Asn125, Ser190, and Gln290.

The protein belongs to the glycosyltransferase 28 family. MurG subfamily.

The protein localises to the cell inner membrane. The enzyme catalyses di-trans,octa-cis-undecaprenyl diphospho-N-acetyl-alpha-D-muramoyl-L-alanyl-D-glutamyl-meso-2,6-diaminopimeloyl-D-alanyl-D-alanine + UDP-N-acetyl-alpha-D-glucosamine = di-trans,octa-cis-undecaprenyl diphospho-[N-acetyl-alpha-D-glucosaminyl-(1-&gt;4)]-N-acetyl-alpha-D-muramoyl-L-alanyl-D-glutamyl-meso-2,6-diaminopimeloyl-D-alanyl-D-alanine + UDP + H(+). It functions in the pathway cell wall biogenesis; peptidoglycan biosynthesis. Functionally, cell wall formation. Catalyzes the transfer of a GlcNAc subunit on undecaprenyl-pyrophosphoryl-MurNAc-pentapeptide (lipid intermediate I) to form undecaprenyl-pyrophosphoryl-MurNAc-(pentapeptide)GlcNAc (lipid intermediate II). The polypeptide is UDP-N-acetylglucosamine--N-acetylmuramyl-(pentapeptide) pyrophosphoryl-undecaprenol N-acetylglucosamine transferase (Chlamydia felis (strain Fe/C-56) (Chlamydophila felis)).